We begin with the raw amino-acid sequence, 118 residues long: Small ribosomal subunit protein bTHXc (118 aa).

A chloroplast-targeting transit peptide spans 1-55 (MASLILGAPPRVTVALPSSRLSSSHSETAGVSLSCFTHQFSLSTSSSSSIPLVYC). The segment at 61–118 (KTAKGKRFNHSFGNARPRNKSKGRGPERVPVPPAPPRKDKFENDEKIKIDIDESLFSN) is disordered. Positions 96 to 111 (PRKDKFENDEKIKIDI) are enriched in basic and acidic residues. Phosphoserine is present on S117.

This sequence belongs to the bacterial ribosomal protein bTHX family. As to quaternary structure, part of the 30S ribosomal subunit.

Its subcellular location is the plastid. It localises to the chloroplast. This Arabidopsis thaliana (Mouse-ear cress) protein is Small ribosomal subunit protein bTHXc (RPS31).